Consider the following 1083-residue polypeptide: DNA primase (1083 aa).

A CHC2-type zinc finger spans residues cysteine 1022 to cysteine 1061.

The protein belongs to the herpesviridae DNA primase family. As to quaternary structure, associates with the helicase and the primase-associated factor to form the helicase-primase factor.

The protein resides in the host nucleus. In terms of biological role, essential component of the helicase/primase complex. Unwinds the DNA at the replication forks and generates single-stranded DNA for both leading and lagging strand synthesis. The primase initiates primer synthesis and thereby produces large amount of short RNA primers on the lagging strand that the polymerase elongates using dNTPs. This is DNA primase from Homo sapiens (Human).